The chain runs to 96 residues: MYKDRDVNQRDSRFENQQDGFKKNSNFRFFKRKSCKFCDSGKHPDYKDFDFLKKFITEQGKILPKRITGTSAKHQRRLALEVKRARYMALLPFVKK.

This sequence belongs to the bacterial ribosomal protein bS18 family. In terms of assembly, part of the 30S ribosomal subunit. Forms a tight heterodimer with protein bS6.

In terms of biological role, binds as a heterodimer with protein bS6 to the central domain of the 16S rRNA, where it helps stabilize the platform of the 30S subunit. The sequence is that of Small ribosomal subunit protein bS18 from Borrelia garinii subsp. bavariensis (strain ATCC BAA-2496 / DSM 23469 / PBi) (Borreliella bavariensis).